The sequence spans 456 residues: Shootin-1 (456 aa).

N-acetylmethionine is present on Met1. A phosphoserine mark is found at Ser3 and Ser4. Residues 7 to 353 (EKQLQLITSL…RVNQSENSVP (347 aa)) are a coiled coil. Residues Ser101 and Ser249 each carry the phosphoserine; by PAK1 modification. Disordered stretches follow at residues 343–405 (KRVN…VTDL) and 418–445 (KKGVHLRPVNQTARPKTKPESSKGCESA). The span at 352–369 (VPPPPPPPPPLPPPPPNP) shows a compositional bias: pro residues. Ser375 bears the Phosphoserine mark.

Belongs to the shootin family. As to quaternary structure, interacts with L1CAM; this interaction occurs in axonal growth cones. Interacts with actin filament retrograde flow; this interaction is enhanced in a netrin-1- and PAK1-dependent manner and promotes F-actin-substrate coupling and concomitant formation of traction forces at axonal growth cones. Interacts with RUFY3. Interacts with PFN2. Interacts (via N-terminus) with KIF20B; this interaction is direct and promotes the association of SHTN1 to microtubules in primary neurons. Associates with microtubule. In terms of processing, phosphorylated on Ser-101 and Ser-249 by PAK1 through a CDC42- and RAC1-dependent signaling pathway, which enhances its association with F-actin retrograde flow in filopodia and lamellipodia of axonal growth cones. Phosphorylation on Ser-101 and Ser-249 is increased by netrin-1.

It localises to the perikaryon. The protein resides in the cell projection. It is found in the axon. The protein localises to the growth cone. Its subcellular location is the cytoplasm. It localises to the cytoskeleton. The protein resides in the filopodium. It is found in the lamellipodium. In terms of biological role, involved in the generation of internal asymmetric signals required for neuronal polarization and neurite outgrowth. Mediates netrin-1-induced F-actin-substrate coupling or 'clutch engagement' within the axon growth cone through activation of CDC42, RAC1 and PAK1-dependent signaling pathway, thereby converting the F-actin retrograde flow into traction forces, concomitantly with filopodium extension and axon outgrowth. Plays a role in cytoskeletal organization by regulating the subcellular localization of phosphoinositide 3-kinase (PI3K) activity at the axonal growth cone. Also plays a role in regenerative neurite outgrowth. In the developing cortex, cooperates with KIF20B to promote both the transition from the multipolar to the bipolar stage and the radial migration of cortical neurons from the ventricular zone toward the superficial layer of the neocortex. Involved in the accumulation of phosphatidylinositol 3,4,5-trisphosphate (PIP3) in the growth cone of primary hippocampal neurons. The sequence is that of Shootin-1 from Pongo abelii (Sumatran orangutan).